The sequence spans 835 residues: MKRRTDPECTAPIKKQKKRVAELALSLSSTSDDEPPSSVSHGAKASTTSLSGSDSETEGKQHSSDSFDDAFKADSLVEGTSSRYSMYNSVSQKLMAKMGFREGEGLGKYSQGRKDIVEASSQKGRRGLGLTLRGFDQELNVDWRDEPEPSACEQVSWFPECTTEIPDTQEMSDWMVVGKRKMIIEDETEFCGEELLHSVLQCKSVFDVLDGEEMRRARTRANPYEMIRGVFFLNRAAMKMANMDFVFDRMFTNPRDSYGKPLVKDREAELLYFADVCAGPGGFSEYVLWRKKWHAKGFGMTLKGPNDFKLEDFYSASSELFEPYYGEGGIDGDGDITRPENISAFRNFVLDNTDRKGVHFLMADGGFSVEGQENLQEILSKQLLLCQFLMALSIVRTGGHFICKTFDLFTPFSVGLVYLLYCCFERVCLFKPITSRPANSERYVVCKGLKVGIDDVRDYLFAVNIKLNQLRNTDSDVNLVVPLEVIKGDHEFTDYMIRSNESHCSLQIKALAKIHAFVQDTTLSEPRQAEIRKECLRLWGIPDQARVAPSSSDPKSKFFELIQGTEIDIFSYKPTLLTSKTLEKIRPVFDYRCMVSGSEQKFLIGLGKSQIYTWDGRQSDRWIKLDLKTELPRDTLLSVEIVHELKGEGKAQRKISAIHILDVLVLNGTDVREQHFNQRIQLAEKFVKAVSKPSRPDMNPIRVKEVYRLEEMEKIFVRLEMKIIKGSSGTPKLSYTGRDDRHFVPMGLYIVRTVNEPWTMGFSKSFKKKFFYNKKTKDSTFDLPADSIAPFHICYYGRLFWEWGDGIRVHDSQKPQDQDKLSKEDVLSFIQMHRA.

The segment at 1 to 67 (MKRRTDPECT…EGKQHSSDSF (67 aa)) is disordered. The short motif at 2–19 (KRRTDPECTAPIKKQKKR) is the Bipartite nuclear localization signal element. Phosphoserine is present on residues Ser-28, Ser-31, Ser-53, Ser-66, and Ser-91. Positions 37 to 54 (SSVSHGAKASTTSLSGSD) are enriched in polar residues. Positions 57–67 (TEGKQHSSDSF) are enriched in basic and acidic residues. One can recognise a G-patch domain in the interval 87–133 (YNSVSQKLMAKMGFREGEGLGKYSQGRKDIVEASSQKGRRGLGLTLR). Position 108 is an N6-acetyllysine (Lys-108). Substrate-binding positions include 203–207 (KSVFD) and Arg-218. The region spanning 231–450 (FFLNRAAMKM…ERYVVCKGLK (220 aa)) is the RrmJ-type SAM-dependent 2'-O-MTase domain. Position 234 (Asn-234) interacts with S-adenosyl-L-methionine. Residue Lys-239 is part of the active site. S-adenosyl-L-methionine is bound by residues 277-283 (CAGPGGF) and 335-336 (DI). Residue Asp-364 is part of the active site. A substrate-binding site is contributed by 374–376 (NLQ). The active-site Proton acceptor is the Lys-404. Residue Asn-439 participates in substrate binding. Positions 727 to 835 (SSGTPKLSYT…VLSFIQMHRA (109 aa)) are interaction with POLR2A. In terms of domain architecture, WW spans 752–786 (RTVNEPWTMGFSKSFKKKFFYNKKTKDSTFDLPAD).

Interacts with POLR2A (via C-terminus).

The protein resides in the nucleus. The enzyme catalyses a 5'-end (N(7)-methyl 5'-triphosphoguanosine)-ribonucleoside in mRNA + S-adenosyl-L-methionine = a 5'-end (N(7)-methyl 5'-triphosphoguanosine)-(2'-O-methyl-ribonucleoside) in mRNA + S-adenosyl-L-homocysteine + H(+). Its function is as follows. S-adenosyl-L-methionine-dependent methyltransferase that mediates mRNA cap1 2'-O-ribose methylation to the 5'-cap structure of mRNAs. Methylates the ribose of the first nucleotide of a m(7)GpppG-capped mRNA and small nuclear RNA (snRNA) to produce m(7)GpppRm (cap1). Displays a preference for cap0 transcripts. Cap1 modification is linked to higher levels of translation. May be involved in the interferon response pathway. This chain is Cap-specific mRNA (nucleoside-2'-O-)-methyltransferase 1 (CMTR1), found in Homo sapiens (Human).